The primary structure comprises 216 residues: Alanyl-tRNA editing protein AlaX-M (216 aa).

Zn(2+)-binding residues include His99, His103, and Cys182.

This sequence belongs to the class-II aminoacyl-tRNA synthetase family. Editing domain AlaX-M subfamily. Monomer. The cofactor is Zn(2+).

The protein localises to the cytoplasm. Functions in trans to edit the amino acid moiety from mischarged charged Gly-tRNA(Ala) and Ser-tRNA(Ala). In Pyrococcus horikoshii (strain ATCC 700860 / DSM 12428 / JCM 9974 / NBRC 100139 / OT-3), this protein is Alanyl-tRNA editing protein AlaX-M (alaXM).